A 622-amino-acid polypeptide reads, in one-letter code: Probable Xaa-Pro aminopeptidase P (622 aa).

Residues aspartate 419, aspartate 430, glutamate 528, and glutamate 542 each contribute to the Mn(2+) site.

It belongs to the peptidase M24B family. The cofactor is Mn(2+).

It catalyses the reaction Release of any N-terminal amino acid, including proline, that is linked to proline, even from a dipeptide or tripeptide.. In terms of biological role, catalyzes the removal of a penultimate prolyl residue from the N-termini of peptides. This is Probable Xaa-Pro aminopeptidase P (AMPP) from Coprinopsis cinerea (strain Okayama-7 / 130 / ATCC MYA-4618 / FGSC 9003) (Inky cap fungus).